The primary structure comprises 359 residues: Peptide chain release factor 1 (359 aa).

Q233 is modified (N5-methylglutamine).

Belongs to the prokaryotic/mitochondrial release factor family. In terms of processing, methylated by PrmC. Methylation increases the termination efficiency of RF1.

Its subcellular location is the cytoplasm. In terms of biological role, peptide chain release factor 1 directs the termination of translation in response to the peptide chain termination codons UAG and UAA. The sequence is that of Peptide chain release factor 1 from Cytophaga hutchinsonii (strain ATCC 33406 / DSM 1761 / CIP 103989 / NBRC 15051 / NCIMB 9469 / D465).